Reading from the N-terminus, the 332-residue chain is Centrosomal AT-AC splicing factor (332 aa).

The segment at 1-169 is required for centrosome location; the sequence is MAPAQRCPLC…QSRQEVVRSV (169 aa). Lysine 31 is subject to N6-acetyllysine; by NAT10. Residues 137-168 adopt a coiled-coil conformation; that stretch reads LDSYEEKEDKVIKEMAAQIREVEQSRQEVVRS. The interval 169–213 is disordered; sequence VLEPQAVPDPEEGSSAPRSWKGMNSQVASSLQQPSNLDLPPAPEL. Positions 190–204 are enriched in polar residues; it reads GMNSQVASSLQQPSN.

Interacts with SASS6; the interaction increases with CENATAC acetylation. Post-translationally, acetylated. Acetylation oscillates throughout the cell cycle, and the acetylation state at Lys-31 is regulated by the deacetylase SIRT1 and the acetyltransferase NAT10. Deacetylated CENATAC is responsible for its centrosome targeting, and acetylated CENATAC promotes SASS6 degradation by enhancing the binding affinity of SASS6 for APC/C E3 ubiquitin-protein ligase complex/FZR1.

The protein localises to the cytoplasm. It localises to the cytoskeleton. The protein resides in the microtubule organizing center. Its subcellular location is the centrosome. Functionally, component of the minor spliceosome that promotes splicing of a specific, rare minor intron subtype. Negative regulator of centrosome duplication. Constrains centriole number by modulating the degradation of the centrosome-duplication-associated protein SASS6 in an acetylation-dependent manner. SIRT1 deacetylates CENATAC in G1 phase, allowing for SASS6 accumulation on the centrosome and subsequent procentriole assembly. The CENATAC acetylation level is restored in mitosis by NAT10, promoting SASS6 proteasome degradation by facilitating SASS6 binding to APC/C E3 ubiquitin-protein ligase complex/FZR1. This is Centrosomal AT-AC splicing factor from Homo sapiens (Human).